The chain runs to 307 residues: Putative transcription factor bHLH086 (307 aa).

Disordered stretches follow at residues 1–49 (MSLI…DHQN) and 167–215 (HEST…QSLA). Composition is skewed to polar residues over residues 12–28 (NYIS…SPQN) and 183–197 (GENT…SGTN). The segment at 207-220 (SPKDPQSLAAKNRR) is basic motif. Residues 207–256 (SPKDPQSLAAKNRRERISERLKVLQELVPNGTKVDLVTMLEKAIGYVKFL) enclose the bHLH domain. Residues 221–256 (ERISERLKVLQELVPNGTKVDLVTMLEKAIGYVKFL) form a helix-loop-helix motif region.

In terms of assembly, homodimer. Forms heterodimers with RHD6. Interacts with TIFY10B/JAZ2, TIFY6A/JAZ4, TIFY5A/JAZ8, TIFY7/JAZ9 and TIFY9/JAZ10.

It localises to the nucleus. Transcription factor that is specifically required for the development of root hairs. Acts with RHD6 to positively regulate root hair development. Acts downstream of genes that regulate epidermal pattern formation, such as GL2. Acts with RHD6 as transcription factor that integrates a jasmonate (JA) signaling pathway that stimulates root hair growth. The sequence is that of Putative transcription factor bHLH086 from Arabidopsis thaliana (Mouse-ear cress).